Consider the following 542-residue polypeptide: N-substituted formamide deformylase (542 aa).

Residues 1–2 constitute a propeptide that is removed on maturation; the sequence is MT.

As to quaternary structure, homodimer. Requires Zn(2+) as cofactor.

It carries out the reaction N-benzylformamide + H2O = benzylamine + formate. With respect to regulation, completely inhibited by HgCl(2), CuCl, CuCl(2) and AgNO(3). Partially inhibited by ZnCl(2) and SnCl(2). Almost completely inhibited by the reducing reagent DTT. Partially inhibited by phenylhydrazine. Moderately inhibited by phenanthroline and 8-hydroxyquinoline. Completely inhibited by the thiol-specific inhibitors N-ethylmaleimide and p-chloromercuribenzoate. Not inhibited by the carbonyl-specific inhibitors aminoguanidine and semicarbazide, the chelating agents alpha,alpha'-dipyridyl, KCN, diethyldithiocarbamate and EDTA, or the oxidizing reagents and serine-modifying reagents such as H(2)O(2), ammonium persulfate, phenylmethanesulfonyl fluoride and diisopropyl fluorophosphates. Hydrolyzes N-substituted formamides, but not amides. N-benzylformamide is the preferred substrate, while N-butylformamide is hydrolyzed at a much lower rate. Has very low activity towards allylformamide, N-(2-cyclohex-1-enylethyl)formamide and N-(alpha-methylbenzyl)formamide. This is N-substituted formamide deformylase from Arthrobacter pascens.